Consider the following 515-residue polypeptide: Bifunctional purine biosynthesis protein PurH (515 aa).

Positions 1–145 constitute an MGS-like domain; sequence MTKRALISVS…KNHASVTVVV (145 aa).

This sequence belongs to the PurH family.

It carries out the reaction (6R)-10-formyltetrahydrofolate + 5-amino-1-(5-phospho-beta-D-ribosyl)imidazole-4-carboxamide = 5-formamido-1-(5-phospho-D-ribosyl)imidazole-4-carboxamide + (6S)-5,6,7,8-tetrahydrofolate. It catalyses the reaction IMP + H2O = 5-formamido-1-(5-phospho-D-ribosyl)imidazole-4-carboxamide. The protein operates within purine metabolism; IMP biosynthesis via de novo pathway; 5-formamido-1-(5-phospho-D-ribosyl)imidazole-4-carboxamide from 5-amino-1-(5-phospho-D-ribosyl)imidazole-4-carboxamide (10-formyl THF route): step 1/1. Its pathway is purine metabolism; IMP biosynthesis via de novo pathway; IMP from 5-formamido-1-(5-phospho-D-ribosyl)imidazole-4-carboxamide: step 1/1. This Streptococcus agalactiae serotype Ia (strain ATCC 27591 / A909 / CDC SS700) protein is Bifunctional purine biosynthesis protein PurH.